The sequence spans 208 residues: Small ribosomal subunit protein uS4A (208 aa).

Residues 98–159 (SRLDNVAYNM…HAKSYLRIKA (62 aa)) enclose the S4 RNA-binding domain.

Belongs to the universal ribosomal protein uS4 family. In terms of assembly, part of the 30S ribosomal subunit. Contacts protein S5. The interaction surface between S4 and S5 is involved in control of translational fidelity.

Its function is as follows. One of the primary rRNA binding proteins, it binds directly to 16S rRNA where it nucleates assembly of the body of the 30S subunit. In terms of biological role, with S5 and S12 plays an important role in translational accuracy. In Nitrosomonas europaea (strain ATCC 19718 / CIP 103999 / KCTC 2705 / NBRC 14298), this protein is Small ribosomal subunit protein uS4A (rpsD1).